The sequence spans 67 residues: Large ribosomal subunit protein bL35 (67 aa).

The protein belongs to the bacterial ribosomal protein bL35 family.

This Dehalococcoides mccartyi (strain ATCC BAA-2266 / KCTC 15142 / 195) (Dehalococcoides ethenogenes (strain 195)) protein is Large ribosomal subunit protein bL35.